The following is a 1180-amino-acid chain: Polyamine-transporting ATPase 13A2 (1180 aa).

The Cytoplasmic segment spans residues 1 to 44; the sequence is MSADSSPLVGSTPTGYGTLTIGTSIDPLSSSVSSVRLSGYCGSP. An intramembrane segment occupies 45 to 65; the sequence is WRVIGYHVVVWMMAGIPLLLF. Residues 66–235 are Cytoplasmic-facing; that stretch reads RWKPLWGVRL…KSYPQLLVDE (170 aa). Ser151 bears the Phosphoserine mark. A helical membrane pass occupies residues 236-253; that stretch reads ALNPYYGFQAFSIALWLA. At 254-256 the chain is on the lumenal side; it reads DHY. A helical transmembrane segment spans residues 257–276; sequence YWYALCIFLISSISICLSLY. The Cytoplasmic portion of the chain corresponds to 277–427; sequence KTRKQSQTLR…NFKFYKHSMK (151 aa). The helical transmembrane segment at 428–448 threads the bilayer; sequence FVAALSVLALLGTIYSIFILY. At 449 to 463 the chain is on the lumenal side; the sequence is RNRVPLNEIVIRALD. The chain crosses the membrane as a helical span at residues 464–484; it reads LVTVVVPPALPAAMTVCTLYA. Residues 485–930 are Cytoplasmic-facing; sequence QSRLRRQGIF…REGRCSLDTS (446 aa). Asp513 serves as the catalytic 4-aspartylphosphate intermediate. Mg(2+) is bound by residues Asp878 and Asp882. A helical membrane pass occupies residues 931–951; it reads FSVFKYMALYSLTQFISVLIL. Residues 952-957 are Lumenal-facing; it reads YTINTN. The chain crosses the membrane as a helical span at residues 958 to 978; the sequence is LGDLQFLAIDLVITTTVAVLM. Residues 979–994 lie on the Cytoplasmic side of the membrane; that stretch reads SRTGPALVLGRVRPPG. A helical transmembrane segment spans residues 995-1015; that stretch reads ALLSVPVLSSLLLQMVLVTGV. The Lumenal portion of the chain corresponds to 1016–1048; that stretch reads QLGGYFLTLAQPWFVPLNRTVAAPDNLPNYENT. Asn1033 is a glycosylation site (N-linked (GlcNAc...) asparagine). The chain crosses the membrane as a helical span at residues 1049 to 1069; it reads VVFSLSSFQYLILAAAVSKGA. Residues 1070–1080 are Cytoplasmic-facing; sequence PFRRPLYTNVP. A helical transmembrane segment spans residues 1081 to 1101; that stretch reads FLVALALLSSVLVGLVLVPGL. At 1102-1117 the chain is on the lumenal side; sequence LQGPLALRNITDTGFK. Residue Asn1110 is glycosylated (N-linked (GlcNAc...) asparagine). A helical transmembrane segment spans residues 1118 to 1138; sequence LLLLGLVTLNFVGAFMLESVL. Residues 1139–1180 lie on the Cytoplasmic side of the membrane; that stretch reads DQCLPACLRRLRPKRASKKRFKQLERELAEQPWPPLPAGPLR.

It belongs to the cation transport ATPase (P-type) (TC 3.A.3) family. Type V subfamily. As to quaternary structure, interacts with MYCBP2; the interaction inhibits the ubiquitination of TSC2 by MYCBP2. Interacts with HDAC6; the interaction results in recruitment of HDAC6 to lysosomes to promote CTTN deacetylation. Post-translationally, autophosphorylated. Accumulates in an inactive autophosphorylated state and autophosphorylation is stimulated by phosphatidic acid and phosphatidylinositol 3,5-bisphosphate but not by Mn(2+) or Zn(2+). The presence of spermine results in a dose-dependent reduction in autophosphorylation. Expressed in brain; protein levels are markedly increased in brain from subjects with Parkinson disease and subjects with dementia with Lewy bodies. Detected in pyramidal neurons located throughout the cingulate cortex (at protein level). In the substantia nigra, it is found in neuromelanin-positive dopaminergic neurons (at protein level).

The protein localises to the lysosome membrane. Its subcellular location is the late endosome membrane. The protein resides in the endosome. It localises to the multivesicular body membrane. It is found in the cytoplasmic vesicle. The protein localises to the autophagosome membrane. The enzyme catalyses spermidine(out) + ATP + H2O = spermidine(in) + ADP + phosphate + H(+). The catalysed reaction is spermine(out) + ATP + H2O = spermine(in) + ADP + phosphate + H(+). Its activity is regulated as follows. Accumulates in an inactive autophosphorylated state. The presence of spermine results in a dose-dependent reduction in autophosphorylation. ATPase which acts as a lysosomal polyamine exporter with high affinity for spermine. Also stimulates cellular uptake of polyamines and protects against polyamine toxicity. Plays a role in intracellular cation homeostasis and the maintenance of neuronal integrity. Contributes to cellular zinc homeostasis. Confers cellular protection against Mn(2+) and Zn(2+) toxicity and mitochondrial stress. Required for proper lysosomal and mitochondrial maintenance. Regulates the autophagy-lysosome pathway through the control of SYT11 expression at both transcriptional and post-translational levels. Facilitates recruitment of deacetylase HDAC6 to lysosomes to deacetylate CTTN, leading to actin polymerization, promotion of autophagosome-lysosome fusion and completion of autophagy. Promotes secretion of exosomes as well as secretion of SCNA via exosomes. Plays a role in lipid homeostasis. In Homo sapiens (Human), this protein is Polyamine-transporting ATPase 13A2.